The sequence spans 308 residues: Putative mitochondrial transporter UCP3 (308 aa).

The Mitochondrial intermembrane portion of the chain corresponds to 1-10 (MVGLKPPEVP). A helical membrane pass occupies residues 11-32 (PTTAVKLLGAGTAACFADLLTF). 3 Solcar repeats span residues 11 to 102 (PTTA…VKQL), 111 to 202 (SSIT…IKEK), and 211 to 296 (DNLP…LKRA). At 33–73 (PLDTAKVRLQIQGENQAARSAQYRGVLGTILTMVRNEGPRS) the chain is on the mitochondrial matrix side. A helical transmembrane segment spans residues 74–96 (PYNGLVAGLQRQMSFASIRIGLY). The Mitochondrial intermembrane segment spans residues 97–116 (DSVKQLYTPKGSDHSSITTR). The chain crosses the membrane as a helical span at residues 117 to 133 (ILAGCTTGAMAVTCAQP). Residues 134 to 179 (TDVVKVRFQASIHAGPRSNRKYSGTMDAYRTIAREEGVRGLWKGIL) are Mitochondrial matrix-facing. Residues 180–196 (PNITRNAIVNCAEMVTY) traverse the membrane as a helical segment. The Mitochondrial intermembrane portion of the chain corresponds to 197–213 (DVIKEKVLDYHLLTDNL). A helical transmembrane segment spans residues 214–233 (PCHFVSAFGAGFCATVVASP). The Mitochondrial matrix segment spans residues 234 to 267 (VDVVKTRYMNSPPGQYQNPLDCMLKMVTQEGPTA). Residues 268-290 (FYKGFTPSFLRLGSWNVVMFVSY) traverse the membrane as a helical segment. The interval 275–297 (SFLRLGSWNVVMFVSYEQLKRAL) is purine nucleotide binding. The Mitochondrial intermembrane segment spans residues 291–308 (EQLKRALMKVQMLRESPF).

It belongs to the mitochondrial carrier (TC 2.A.29) family. In terms of assembly, interacts with HAX1; the interaction is direct and calcium-dependent.

The protein resides in the mitochondrion inner membrane. Its function is as follows. Putative transmembrane transporter that plays a role in mitochondrial metabolism via an as yet unclear mechanism. Originally, this mitochondrial protein was thought to act as a proton transmembrane transporter from the mitochondrial intermembrane space into the matrix, causing proton leaks through the inner mitochondrial membrane, thereby uncoupling mitochondrial membrane potential generation from ATP synthesis. However, this function is controversial and uncoupling may not be the function, or at least not the main function, but rather a consequence of more conventional metabolite transporter activity. In Sus scrofa (Pig), this protein is Putative mitochondrial transporter UCP3.